Reading from the N-terminus, the 146-residue chain is Ribonuclease H (146 aa).

Residues 4–145 (ELNKVVIYTD…ADMLARSQIV (142 aa)) enclose the RNase H type-1 domain. Residues Asp-13, Glu-51, Asp-73, and Asp-137 each contribute to the Mg(2+) site.

It belongs to the RNase H family. Monomer. Mg(2+) is required as a cofactor.

The protein localises to the cytoplasm. It catalyses the reaction Endonucleolytic cleavage to 5'-phosphomonoester.. Its function is as follows. Endonuclease that specifically degrades the RNA of RNA-DNA hybrids. The sequence is that of Ribonuclease H from Ehrlichia chaffeensis (strain ATCC CRL-10679 / Arkansas).